The chain runs to 425 residues: Kynurenine/alpha-aminoadipate aminotransferase, mitochondrial (425 aa).

The transit peptide at 1–29 (MNYARFITATSAARKPSTIRVMTEILSKA) directs the protein to the mitochondrion. Arginine 20 contributes to the substrate binding site. Residue lysine 69 is modified to N6-acetyllysine. Positions 74 and 142 each coordinate substrate. Residues 178-208 (WKPEDSKNPKKNSPKFLYTVPNGNNPSGNSL) are disordered. Lysine 179 carries the N6-acetyllysine modification. A compositionally biased stretch (polar residues) spans 198-208 (PNGNNPSGNSL). Asparagine 202 lines the substrate pocket. Lysine 263 carries the N6-(pyridoxal phosphate)lysine; alternate modification. Lysine 263 and lysine 339 each carry N6-acetyllysine; alternate. N6-succinyllysine; alternate occurs at positions 263 and 339. Arginine 399 contacts substrate. Lysine 422 bears the N6-acetyllysine mark.

The protein belongs to the class-I pyridoxal-phosphate-dependent aminotransferase family. Homodimer. It depends on pyridoxal 5'-phosphate as a cofactor.

The protein resides in the mitochondrion. The catalysed reaction is L-kynurenine + 2-oxoglutarate = kynurenate + L-glutamate + H2O. It catalyses the reaction L-2-aminoadipate + 2-oxoglutarate = 2-oxoadipate + L-glutamate. It carries out the reaction glycine + 2-oxoglutarate = glyoxylate + L-glutamate. The enzyme catalyses L-kynurenine + glyoxylate = kynurenate + glycine + H2O. The catalysed reaction is 3-hydroxy-L-kynurenine + glyoxylate = xanthurenate + glycine + H2O. It catalyses the reaction 2-oxohexanoate + L-kynurenine = L-2-aminohexanoate + kynurenate + H2O. It carries out the reaction 3-phenylpyruvate + L-kynurenine = kynurenate + L-phenylalanine + H2O. The enzyme catalyses 4-methylsulfanyl-2-oxobutanoate + L-kynurenine = kynurenate + L-methionine + H2O. The catalysed reaction is 2-oxo-3-sulfanylpropanoate + L-kynurenine = kynurenate + L-cysteine + H2O. It catalyses the reaction indole-3-pyruvate + L-kynurenine = kynurenate + L-tryptophan + H2O. It carries out the reaction 2-oxopentanoate + L-kynurenine = L-2-aminopentanoate + kynurenate + H2O. The enzyme catalyses 4-methyl-2-oxopentanoate + L-kynurenine = kynurenate + L-leucine + H2O. The catalysed reaction is glyoxylate + L-methionine = 4-methylsulfanyl-2-oxobutanoate + glycine. It catalyses the reaction L-2-aminoadipate + glyoxylate = 2-oxoadipate + glycine. It carries out the reaction L-tyrosine + glyoxylate = 3-(4-hydroxyphenyl)pyruvate + glycine. The enzyme catalyses glyoxylate + L-phenylalanine = 3-phenylpyruvate + glycine. The catalysed reaction is L-tryptophan + glyoxylate = indole-3-pyruvate + glycine. It catalyses the reaction L-leucine + glyoxylate = 4-methyl-2-oxopentanoate + glycine. It carries out the reaction 2-oxobutanoate + L-kynurenine = (2S)-2-aminobutanoate + kynurenate + H2O. The enzyme catalyses 2-oxoadipate + L-kynurenine = L-2-aminoadipate + kynurenate + H2O. It participates in amino-acid degradation; L-lysine degradation via saccharopine pathway; glutaryl-CoA from L-lysine: step 4/6. Functionally, transaminase with broad substrate specificity. Has transaminase activity towards aminoadipate, kynurenine, methionine and glutamate. Shows activity also towards tryptophan, aspartate and hydroxykynurenine. Accepts a variety of oxo-acids as amino-group acceptors, with a preference for 2-oxoglutarate, 2-oxocaproic acid, phenylpyruvate and alpha-oxo-gamma-methiol butyric acid. Can also use glyoxylate as amino-group acceptor (in vitro). The polypeptide is Kynurenine/alpha-aminoadipate aminotransferase, mitochondrial (Bos taurus (Bovine)).